A 314-amino-acid polypeptide reads, in one-letter code: Methionyl-tRNA formyltransferase (314 aa).

A (6S)-5,6,7,8-tetrahydrofolate-binding site is contributed by 110 to 113 (SLLP).

The protein belongs to the Fmt family.

The enzyme catalyses L-methionyl-tRNA(fMet) + (6R)-10-formyltetrahydrofolate = N-formyl-L-methionyl-tRNA(fMet) + (6S)-5,6,7,8-tetrahydrofolate + H(+). Attaches a formyl group to the free amino group of methionyl-tRNA(fMet). The formyl group appears to play a dual role in the initiator identity of N-formylmethionyl-tRNA by promoting its recognition by IF2 and preventing the misappropriation of this tRNA by the elongation apparatus. The protein is Methionyl-tRNA formyltransferase of Bacillus anthracis (strain A0248).